A 591-amino-acid polypeptide reads, in one-letter code: Calnexin (591 aa).

The signal sequence occupies residues 1 to 20 (MEGKWLLCLLLVLGTAAIQA). The Lumenal portion of the chain corresponds to 21-482 (HDGHDDDMID…QMLEAAEERP (462 aa)). Residues S75 and D118 each contribute to the Ca(2+) site. K138 carries the post-translational modification N6-acetyllysine. A disulfide bond links C161 and C195. Positions 165, 167, 186, and 193 each coordinate an alpha-D-glucoside. The segment at 261 to 347 (GNLLNDMTPP…EKPEDWDEDM (87 aa)) is disordered. A compositionally biased stretch (basic and acidic residues) spans 275 to 320 (REIEDPEDRKPEDWDERPKIADPDAVKPDDWDEDAPSKIPDEEATK). A p domain (Extended arm) region spans residues 277 to 410 (IEDPEDRKPE…RKIPNPDFFE (134 aa)). 5 consecutive repeat copies span residues 279–291 (DPED…WDER), 296–308 (DPDA…WDED), 315–327 (DEEA…WLDD), 334–346 (DPDA…WDED), and 349–359 (GEWEAPQIANP). 4 X approximate repeats stretches follow at residues 279–346 (DPED…WDED) and 349–406 (GEWE…IPNP). Residues 324–347 (WLDDEPEYIPDPDAEKPEDWDEDM) show a composition bias toward acidic residues. An interaction with PPIB region spans residues 327–360 (DEPEYIPDPDAEKPEDWDEDMDGEWEAPQIANPK). C361 and C367 are joined by a disulfide. 3 consecutive repeat copies span residues 368 to 378 (GVWQRPMIDNP), 382 to 392 (GKWKPPMIDNP), and 396 to 406 (GIWKPRKIPNP). E426 is a binding site for an alpha-D-glucoside. D437 is a binding site for Ca(2+). Residues 483–503 (WLWVVYILTVALPVFLVILFC) traverse the membrane as a helical segment. S-palmitoyl cysteine attachment occurs at residues C503 and C504. Topologically, residues 504–591 (CSGKKQSNAM…SPRNRKPRRE (88 aa)) are cytoplasmic. Residues 504–591 (CSGKKQSNAM…SPRNRKPRRE (88 aa)) form a sufficient to mediate interaction with SGIP1 region. Residues 514–538 (EYKKTDAPQPDVKDEEGKEEEKNKG) show a composition bias toward basic and acidic residues. The segment at 514–591 (EYKKTDAPQP…SPRNRKPRRE (78 aa)) is disordered. S553 is modified (phosphoserine). Positions 555–568 (AEEDGGTGSQDEED) are enriched in acidic residues. A Phosphothreonine modification is found at T561. Position 563 is a phosphoserine; by MAPK3 (S563). A Phosphoserine modification is found at S582.

The protein belongs to the calreticulin family. Interacts with MAPK3/ERK1. Interacts with KCNH2. Associates with ribosomes. Interacts with SGIP1; involved in negative regulation of endocytosis. The palmitoylated form interacts with the ribosome-translocon complex component SSR1, promoting efficient folding of glycoproteins. Interacts with SERPINA2P/SERPINA2 and with the S and Z variants of SERPINA1. Interacts with PPIB. Interacts with ZNRF4. Interacts with SMIM22. Interacts with TMX2. Interacts with TMEM35A/NACHO and CHRNA7. Interacts with reticulophagy regulators RETREG2 and RETREG3. Interacts with DNM1L; may form part of a larger protein complex at the ER-mitochondrial interface during mitochondrial fission. Interacts with ADAM7. Phosphorylated at Ser-563 by MAPK3/ERK1. Phosphorylation by MAPK3/ERK1 increases its association with ribosomes. Post-translationally, palmitoylation by DHHC6 leads to the preferential localization to the perinuclear rough ER. It mediates the association of calnexin with the ribosome-translocon complex (RTC) which is required for efficient folding of glycosylated proteins. In terms of processing, ubiquitinated, leading to proteasomal degradation. Probably ubiquitinated by ZNRF4.

The protein localises to the endoplasmic reticulum membrane. It localises to the mitochondrion membrane. Its subcellular location is the melanosome membrane. In terms of biological role, calcium-binding protein that interacts with newly synthesized monoglucosylated glycoproteins in the endoplasmic reticulum. It may act in assisting protein assembly and/or in the retention within the ER of unassembled protein subunits. It seems to play a major role in the quality control apparatus of the ER by the retention of incorrectly folded proteins. Associated with partial T-cell antigen receptor complexes that escape the ER of immature thymocytes, it may function as a signaling complex regulating thymocyte maturation. Additionally it may play a role in receptor-mediated endocytosis at the synapse. The sequence is that of Calnexin (Canx) from Rattus norvegicus (Rat).